The chain runs to 212 residues: MQSAMFLTVHHDCGPMDKSAGTGPKSEEKREKMKRTLLKDWKTRLSYFLQNSSSPGKPKTGKKSKPQTFIKPSPEEAQLWAEAFDELLASKYGLAAFRAFLKSEFCEENIEFWLACEDFKKTKSPQKLSSKARKIYTDFIEKEAPKEINIDFQTKTLIAQNIQEATSGCFTTAQKRVYSLMENNSYPRFLESEFYQDLCRKPPQITTEPHAT.

Disordered regions lie at residues 11–33 (HDCG…REKM) and 48–69 (FLQN…PQTF). The interval 32 to 66 (KMKRTLLKDWKTRLSYFLQNSSSPGKPKTGKKSKP) is necessary for membrane association. A necessary to inhibit protein synthesis region spans residues 79–116 (LWAEAFDELLASKYGLAAFRAFLKSEFCEENIEFWLAC). The 117-residue stretch at 83 to 199 (AFDELLASKY…LESEFYQDLC (117 aa)) folds into the RGS domain.

Interacts with GNAQ. Does not interact with GNAI1 and GNAI3. Interacts with EIF2B5. Interacts with PRKG1 (isoform alpha). Phosphorylated by protein kinase C. Phosphorylation by PRKG1 leads to activation of RGS2 activity.

The protein resides in the cell membrane. Its subcellular location is the cytoplasm. The protein localises to the nucleus. It localises to the nucleolus. In terms of biological role, regulates G protein-coupled receptor signaling cascades. Inhibits signal transduction by increasing the GTPase activity of G protein alpha subunits, thereby driving them into their inactive GDP-bound form. It is involved in the negative regulation of the angiotensin-activated signaling pathway. Plays a role in the regulation of blood pressure in response to signaling via G protein-coupled receptors and GNAQ. Plays a role in regulating the constriction and relaxation of vascular smooth muscle. Binds EIF2B5 and blocks its activity, thereby inhibiting the translation of mRNA into protein. The polypeptide is Regulator of G-protein signaling 2 (RGS2) (Sus scrofa (Pig)).